A 285-amino-acid polypeptide reads, in one-letter code: Shikimate dehydrogenase (NADP(+)) (285 aa).

Shikimate-binding positions include Ser20–Ser22 and Ser67. The active-site Proton acceptor is Lys71. 2 residues coordinate shikimate: Asn92 and Asp107. NADP(+)-binding positions include Gly129–Ala133 and Ile227. Tyr229 contacts shikimate. Gly250 is an NADP(+) binding site.

The protein belongs to the shikimate dehydrogenase family. As to quaternary structure, homodimer.

The catalysed reaction is shikimate + NADP(+) = 3-dehydroshikimate + NADPH + H(+). It functions in the pathway metabolic intermediate biosynthesis; chorismate biosynthesis; chorismate from D-erythrose 4-phosphate and phosphoenolpyruvate: step 4/7. In terms of biological role, involved in the biosynthesis of the chorismate, which leads to the biosynthesis of aromatic amino acids. Catalyzes the reversible NADPH linked reduction of 3-dehydroshikimate (DHSA) to yield shikimate (SA). The sequence is that of Shikimate dehydrogenase (NADP(+)) from Streptococcus thermophilus (strain ATCC BAA-491 / LMD-9).